The following is a 352-amino-acid chain: Anthranilate phosphoribosyltransferase (352 aa).

5-phospho-alpha-D-ribose 1-diphosphate contacts are provided by residues Gly94, 97-98 (GS), Ser102, 104-107 (NIST), 122-130 (KHGNRAVSS), and Ser134. Gly94 is an anthranilate binding site. Ser106 is a Mg(2+) binding site. Asn125 lines the anthranilate pocket. Arg180 contacts anthranilate. Residues Asp239 and Glu240 each contribute to the Mg(2+) site.

Belongs to the anthranilate phosphoribosyltransferase family. In terms of assembly, homodimer. Mg(2+) is required as a cofactor.

It carries out the reaction N-(5-phospho-beta-D-ribosyl)anthranilate + diphosphate = 5-phospho-alpha-D-ribose 1-diphosphate + anthranilate. Its pathway is amino-acid biosynthesis; L-tryptophan biosynthesis; L-tryptophan from chorismate: step 2/5. Its function is as follows. Catalyzes the transfer of the phosphoribosyl group of 5-phosphorylribose-1-pyrophosphate (PRPP) to anthranilate to yield N-(5'-phosphoribosyl)-anthranilate (PRA). The chain is Anthranilate phosphoribosyltransferase from Citrifermentans bemidjiense (strain ATCC BAA-1014 / DSM 16622 / JCM 12645 / Bem) (Geobacter bemidjiensis).